Here is an 82-residue protein sequence, read N- to C-terminus: Defensin-like protein 75 (82 aa).

The N-terminal stretch at 1–26 (MAKIKSLDVITVAIILLLVIADQATA) is a signal peptide. Disulfide bonds link cysteine 33–cysteine 66, cysteine 37–cysteine 55, cysteine 41–cysteine 64, and cysteine 45–cysteine 65.

This sequence belongs to the DEFL family.

The protein resides in the secreted. The polypeptide is Defensin-like protein 75 (LCR45) (Arabidopsis thaliana (Mouse-ear cress)).